A 321-amino-acid chain; its full sequence is Chloroplastic calcium uniporter protein (321 aa).

The transit peptide at 1-56 (MSSKKSLVQSLFNISKTYSRISGLTRMRPTKSGGIPPDAGDSGIRRRFLHKRAFFS) directs the protein to the chloroplast. The next 2 membrane-spanning stretches (helical) occupy residues 223–243 (LWAG…LTFW) and 249–269 (VMEP…YAFF). The Selectivity filter motif lies at 247-255 (WDVMEPICF). Position 251 (Glu-251) interacts with Ca(2+).

Belongs to the MCU (TC 1.A.77) family.

The protein localises to the plastid. The protein resides in the chloroplast membrane. The catalysed reaction is Ca(2+)(in) = Ca(2+)(out). In terms of biological role, chloroplastic membrane calcium uniporter that mediates calcium uptake into chloroplast stroma. Constitutes a pore-forming and calcium-conducting subunit. Chloroplastic calcium homeostasis plays key roles in cellular physiology. Promotes calcium uptake into chloroplast stroma in response to osmotic-stress, fine-tuning cytosolic MAPK3/MAPK6 phosphorylation and affecting stomata opening. The chain is Chloroplastic calcium uniporter protein from Arabidopsis thaliana (Mouse-ear cress).